We begin with the raw amino-acid sequence, 152 residues long: Transcriptional regulator MraZ (152 aa).

SpoVT-AbrB domains lie at 5–52 (ATLV…PLPA) and 81–124 (ASEC…DEQT).

It belongs to the MraZ family. In terms of assembly, forms oligomers.

Its subcellular location is the cytoplasm. It localises to the nucleoid. Functionally, negatively regulates its own expression and that of the subsequent genes in the proximal part of the division and cell wall (dcw) gene cluster. Acts by binding directly to DNA. May also regulate the expression of genes outside the dcw cluster. The sequence is that of Transcriptional regulator MraZ from Sodalis glossinidius (strain morsitans).